Here is a 208-residue protein sequence, read N- to C-terminus: LexA repressor (208 aa).

Residues 30–50 (VREIGKSVGLSSSSTVAAYLE) constitute a DNA-binding region (H-T-H motif). Catalysis depends on for autocatalytic cleavage activity residues Ser129 and Lys167.

It belongs to the peptidase S24 family. Homodimer.

The catalysed reaction is Hydrolysis of Ala-|-Gly bond in repressor LexA.. Represses a number of genes involved in the response to DNA damage (SOS response), including recA and lexA. In the presence of single-stranded DNA, RecA interacts with LexA causing an autocatalytic cleavage which disrupts the DNA-binding part of LexA, leading to derepression of the SOS regulon and eventually DNA repair. This Lacticaseibacillus casei (strain BL23) (Lactobacillus casei) protein is LexA repressor.